Here is a 294-residue protein sequence, read N- to C-terminus: Formamidopyrimidine-DNA glycosylase (294 aa).

Pro-2 functions as the Schiff-base intermediate with DNA in the catalytic mechanism. The Proton donor role is filled by Glu-3. Catalysis depends on Lys-58, which acts as the Proton donor; for beta-elimination activity. Residues His-105, Arg-124, and Lys-167 each coordinate DNA. The segment at 258–294 adopts an FPG-type zinc-finger fold; sequence QVYDREGEPCRTRGCKGTVKRFTQNGRSTFWCPSCQK. Arg-284 functions as the Proton donor; for delta-elimination activity in the catalytic mechanism.

Belongs to the FPG family. In terms of assembly, monomer. The cofactor is Zn(2+).

It carries out the reaction Hydrolysis of DNA containing ring-opened 7-methylguanine residues, releasing 2,6-diamino-4-hydroxy-5-(N-methyl)formamidopyrimidine.. It catalyses the reaction 2'-deoxyribonucleotide-(2'-deoxyribose 5'-phosphate)-2'-deoxyribonucleotide-DNA = a 3'-end 2'-deoxyribonucleotide-(2,3-dehydro-2,3-deoxyribose 5'-phosphate)-DNA + a 5'-end 5'-phospho-2'-deoxyribonucleoside-DNA + H(+). Its function is as follows. Involved in base excision repair of DNA damaged by oxidation or by mutagenic agents. Acts as a DNA glycosylase that recognizes and removes damaged bases. Has a preference for oxidized purines, such as 7,8-dihydro-8-oxoguanine (8-oxoG). Has AP (apurinic/apyrimidinic) lyase activity and introduces nicks in the DNA strand. Cleaves the DNA backbone by beta-delta elimination to generate a single-strand break at the site of the removed base with both 3'- and 5'-phosphates. In Afipia carboxidovorans (strain ATCC 49405 / DSM 1227 / KCTC 32145 / OM5) (Oligotropha carboxidovorans), this protein is Formamidopyrimidine-DNA glycosylase.